Reading from the N-terminus, the 362-residue chain is Phosphoserine aminotransferase (362 aa).

The L-glutamate site is built by Ser9 and Arg42. Pyridoxal 5'-phosphate contacts are provided by residues Gly76–Arg77, Trp102, Thr153, Asp174, and Gln197. At Lys198 the chain carries N6-(pyridoxal phosphate)lysine. A pyridoxal 5'-phosphate-binding site is contributed by Asn239 to Thr240.

This sequence belongs to the class-V pyridoxal-phosphate-dependent aminotransferase family. SerC subfamily. In terms of assembly, homodimer. The cofactor is pyridoxal 5'-phosphate.

It is found in the cytoplasm. The enzyme catalyses O-phospho-L-serine + 2-oxoglutarate = 3-phosphooxypyruvate + L-glutamate. The catalysed reaction is 4-(phosphooxy)-L-threonine + 2-oxoglutarate = (R)-3-hydroxy-2-oxo-4-phosphooxybutanoate + L-glutamate. It functions in the pathway amino-acid biosynthesis; L-serine biosynthesis; L-serine from 3-phospho-D-glycerate: step 2/3. Its pathway is cofactor biosynthesis; pyridoxine 5'-phosphate biosynthesis; pyridoxine 5'-phosphate from D-erythrose 4-phosphate: step 3/5. In terms of biological role, catalyzes the reversible conversion of 3-phosphohydroxypyruvate to phosphoserine and of 3-hydroxy-2-oxo-4-phosphonooxybutanoate to phosphohydroxythreonine. The protein is Phosphoserine aminotransferase of Escherichia coli O1:K1 / APEC.